The primary structure comprises 95 residues: Phosphoribosyl-ATP pyrophosphatase (95 aa).

The protein belongs to the PRA-PH family.

Its subcellular location is the cytoplasm. The enzyme catalyses 1-(5-phospho-beta-D-ribosyl)-ATP + H2O = 1-(5-phospho-beta-D-ribosyl)-5'-AMP + diphosphate + H(+). Its pathway is amino-acid biosynthesis; L-histidine biosynthesis; L-histidine from 5-phospho-alpha-D-ribose 1-diphosphate: step 2/9. The polypeptide is Phosphoribosyl-ATP pyrophosphatase (Methanocella arvoryzae (strain DSM 22066 / NBRC 105507 / MRE50)).